Here is a 205-residue protein sequence, read N- to C-terminus: DNA-directed RNA polymerase subunit 5 (205 aa).

This sequence belongs to the archaeal Rpo5/eukaryotic RPB5 RNA polymerase subunit family.

The protein localises to the virion. The catalysed reaction is RNA(n) + a ribonucleoside 5'-triphosphate = RNA(n+1) + diphosphate. Its function is as follows. DNA-dependent RNA polymerase catalyzes the transcription of DNA into RNA using the four ribonucleoside triphosphates as substrates. The sequence is that of DNA-directed RNA polymerase subunit 5 from Acanthamoeba polyphaga (Amoeba).